A 188-amino-acid polypeptide reads, in one-letter code: Ion-translocating oxidoreductase complex subunit G (188 aa).

Residues Met1–Lys9 are Cytoplasmic-facing. The helical transmembrane segment at Val10–Thr30 threads the bilayer. The Extracellular segment spans residues Pro31–Gly188. Thr166 bears the FMN phosphoryl threonine mark.

Belongs to the RnfG family. The Rnf complex is probably composed of eight subunits, including RnfA, RnfB, RnfC, RnfD, RnfE and RnfG. It depends on FMN as a cofactor.

The protein resides in the cell membrane. Its function is as follows. Part of a membrane-bound complex that couples electron transfer with translocation of ions across the membrane. Catalyzes Na(+) transport, most probably coupled to electron transfer from reduced ferredoxin to methanophenazine and heterodisulfide reductase. Involved in heterodisulfide reduction during methanogenesis from acetate. The sequence is that of Ion-translocating oxidoreductase complex subunit G from Methanosarcina acetivorans (strain ATCC 35395 / DSM 2834 / JCM 12185 / C2A).